A 61-amino-acid polypeptide reads, in one-letter code: Alpha-conotoxine-like Am1.4 (61 aa).

An N-terminal signal peptide occupies residues 1-21 (MGMRMMFTVFLLVVLATTVVS). Positions 22–44 (FMSGRASHGRNAAASDLIALTIK) are excised as a propeptide.

The protein belongs to the conotoxin A superfamily. Is not hydroxylated. In terms of processing, contains 2 disulfide bonds. As to expression, expressed by the venom duct.

The protein resides in the secreted. In terms of biological role, alpha-conotoxins act on postsynaptic membranes, they bind to the nicotinic acetylcholine receptors (nAChR) and thus inhibit them. This is Alpha-conotoxine-like Am1.4 from Conus amadis (Amadis cone).